The following is a 545-amino-acid chain: Aclacinomycin-N/aclacinomycin-A oxidase (545 aa).

The segment at residues 1 to 43 (MFVLNEFTRRGFLGTAAAVGGTTVVTTALGGAPAAQAAVPEAA) is a signal peptide (tat-type signal). In terms of domain architecture, FAD-binding PCMH-type spans 76–256 (FRGRPDVVYV…TRYWFRTPGA (181 aa)). The segment at residues 113 to 173 (HCFEGFVDDP…WGVTIPAGVC (61 aa)) is a cross-link (6-(S-cysteinyl)-8alpha-(pros-histidyl)-FAD (His-Cys)). Tyrosine 421 (proton acceptor) is an active-site residue. Residue threonine 451 coordinates aclacinomycin Y. Asparagine 492 provides a ligand contact to FAD. Tyrosine 493 (proton acceptor) is an active-site residue. Position 493 (tyrosine 493) interacts with aclacinomycin Y.

It belongs to the oxygen-dependent FAD-linked oxidoreductase family. As to quaternary structure, homotetramer; dimer of dimers. It depends on FAD as a cofactor. Predicted to be exported by the Tat system. The position of the signal peptide cleavage has been experimentally proven. Post-translationally, the FAD cofactor is bound via a bicovalent 6-S-cysteinyl, 8alpha-N1-histidyl FAD linkage.

It carries out the reaction aclacinomycin N + O2 = aclacinomycin A + H2O2. The enzyme catalyses aclacinomycin A + O2 = aclacinomycin Y + H2O2. Its activity is regulated as follows. Inhibited by ascorbic acid and iron ion. Involved in the modification of the terminal sugar residues in the last two steps in the biosynthesis of polyketide antibiotics of the aclacinomycin group. In the first reaction, it catalyzes the oxidation of the hydroxyl group at carbon C4 of the L-rhodinose terminal sugar moiety of aclacinomycin N (AclN) to a keto group, modifying the sugar to cinerulose A and generating aclacinomycin A (AclA). In the second reaction, it catalyzes the elimination of two hydrogen atoms from cinerulose A, leading to a double bond between carbon atoms C2 and C3 and the generation of the L-aculose terminal sugar moiety of aclacinomycin Y (AclY). It can also use aclacinomycin analogs, epsilon-pyrromycinone glycosides, rhodirubins (A, B, C and E) and all triglycosides containing L-cinerulose, L-rhodinose or 2-deoxy-L-fucose as terminal sugar. The sequence is that of Aclacinomycin-N/aclacinomycin-A oxidase from Streptomyces galilaeus.